Reading from the N-terminus, the 921-residue chain is uncharacterized protein (921 aa).

A kinase-like region spans residues 334 to 628 (MTKRKFLSID…NLKSIYYDFF (295 aa)). Low complexity predominate over residues 401 to 494 (GSSEWSFGSS…NNNNSDGSSG (94 aa)). Disordered stretches follow at residues 401 to 499 (GSSE…DNRN) and 664 to 711 (NLYS…NSNS).

This is an uncharacterized protein from Dictyostelium discoideum (Social amoeba).